The following is a 484-amino-acid chain: PTS system MurNAc-GlcNAc-specific EIIBC component (484 aa).

Residues 5 to 87 (QQLAERIIAA…AELSGVKLGD (83 aa)) enclose the PTS EIIB type-1 domain. The active-site Phosphocysteine intermediate; for EIIB activity is Cys-27. Residues 130–484 (KSIANIFIPL…AMRQTDLLGD (355 aa)) enclose the PTS EIIC type-1 domain. The next 10 helical transmembrane spans lie at 135–155 (IFIPLIPAFIGAGLIGGIAAV), 160–180 (MVAGYISGAWITQLITVFNVI), 200–220 (FGATPGLGGVIGGTTLLTGIA), 234–254 (LQPGQGGIIGVIFAVWILSIV), 274–294 (IALLIVGLLTIFIFMPLAGFV), 305–325 (IISIGGVFSGFIIGASFLPLV), 349–369 (LLPIAAMAGAGQVGAALALWV), 384–404 (ALPVGFLGIGEPLIYGVTLPL), 408–428 (FLTACIGGGIGGAVIGGIGHI), and 450–470 (LGYIAGLLAAYAGGFVCTYLF).

The protein resides in the cell membrane. It carries out the reaction N-acetyl-beta-D-muramate-(1-&gt;4)-N-acetyl-D-glucosamine(out) + N(pros)-phospho-L-histidyl-[protein] = 6-phospho-N-acetyl-beta-D-muramate-(1-&gt;4)-N-acetyl-D-glucosamine(in) + L-histidyl-[protein]. The protein operates within cell wall biogenesis; peptidoglycan recycling. Its function is as follows. The phosphoenolpyruvate-dependent sugar phosphotransferase system (sugar PTS), a major carbohydrate active transport system, catalyzes the phosphorylation of incoming sugar substrates concomitantly with their translocation across the cell membrane. This system is involved in the uptake and phosphorylation of MurNAc-GlcNAc, the principle peptidoglycan turnover product of S.aureus, yielding cytoplasmic MurNAc 6P-GlcNAc. This Staphylococcus aureus (strain Mu50 / ATCC 700699) protein is PTS system MurNAc-GlcNAc-specific EIIBC component.